A 107-amino-acid polypeptide reads, in one-letter code: N(4)-acetylcytidine amidohydrolase (107 aa).

An ASCH domain is found at 9–105 (TFFEFLTPLI…KLFVIEYELI (97 aa)). Residue Lys-23 is the Proton acceptor of the active site. The Nucleophile role is filled by Thr-26. Glu-76 acts as the Proton donor in catalysis.

Belongs to the N(4)-acetylcytidine amidohydrolase family.

It carries out the reaction N(4)-acetylcytidine + H2O = cytidine + acetate + H(+). It catalyses the reaction N(4)-acetyl-2'-deoxycytidine + H2O = 2'-deoxycytidine + acetate + H(+). The catalysed reaction is N(4)-acetylcytosine + H2O = cytosine + acetate + H(+). Its function is as follows. Catalyzes the hydrolysis of N(4)-acetylcytidine (ac4C). The chain is N(4)-acetylcytidine amidohydrolase from Vibrio parahaemolyticus serotype O3:K6 (strain RIMD 2210633).